Consider the following 338-residue polypeptide: Ketol-acid reductoisomerase (NADP(+)) (338 aa).

Residues 1–181 (MKVFYDKDCD…GGGRAGIIET (181 aa)) form the KARI N-terminal Rossmann domain. NADP(+) contacts are provided by residues 24–27 (YGSQ), R47, and S52. H107 is an active-site residue. G133 serves as a coordination point for NADP(+). The region spanning 182–327 (NFREETETDL…AKLRAMMPWI (146 aa)) is the KARI C-terminal knotted domain. Mg(2+) contacts are provided by D190, E194, E226, and E230. S251 is a substrate binding site.

Belongs to the ketol-acid reductoisomerase family. The cofactor is Mg(2+).

The catalysed reaction is (2R)-2,3-dihydroxy-3-methylbutanoate + NADP(+) = (2S)-2-acetolactate + NADPH + H(+). The enzyme catalyses (2R,3R)-2,3-dihydroxy-3-methylpentanoate + NADP(+) = (S)-2-ethyl-2-hydroxy-3-oxobutanoate + NADPH + H(+). It functions in the pathway amino-acid biosynthesis; L-isoleucine biosynthesis; L-isoleucine from 2-oxobutanoate: step 2/4. It participates in amino-acid biosynthesis; L-valine biosynthesis; L-valine from pyruvate: step 2/4. Functionally, involved in the biosynthesis of branched-chain amino acids (BCAA). Catalyzes an alkyl-migration followed by a ketol-acid reduction of (S)-2-acetolactate (S2AL) to yield (R)-2,3-dihydroxy-isovalerate. In the isomerase reaction, S2AL is rearranged via a Mg-dependent methyl migration to produce 3-hydroxy-3-methyl-2-ketobutyrate (HMKB). In the reductase reaction, this 2-ketoacid undergoes a metal-dependent reduction by NADPH to yield (R)-2,3-dihydroxy-isovalerate. The protein is Ketol-acid reductoisomerase (NADP(+)) of Janthinobacterium sp. (strain Marseille) (Minibacterium massiliensis).